Here is a 155-residue protein sequence, read N- to C-terminus: Large ribosomal subunit protein uL16m (155 aa).

It belongs to the universal ribosomal protein uL16 family.

It is found in the mitochondrion. This Petunia hybrida (Petunia) protein is Large ribosomal subunit protein uL16m (RPL16).